The sequence spans 225 residues: Leucyl/phenylalanyl-tRNA--protein transferase (225 aa).

Belongs to the L/F-transferase family.

It is found in the cytoplasm. The enzyme catalyses N-terminal L-lysyl-[protein] + L-leucyl-tRNA(Leu) = N-terminal L-leucyl-L-lysyl-[protein] + tRNA(Leu) + H(+). It catalyses the reaction N-terminal L-arginyl-[protein] + L-leucyl-tRNA(Leu) = N-terminal L-leucyl-L-arginyl-[protein] + tRNA(Leu) + H(+). It carries out the reaction L-phenylalanyl-tRNA(Phe) + an N-terminal L-alpha-aminoacyl-[protein] = an N-terminal L-phenylalanyl-L-alpha-aminoacyl-[protein] + tRNA(Phe). In terms of biological role, functions in the N-end rule pathway of protein degradation where it conjugates Leu, Phe and, less efficiently, Met from aminoacyl-tRNAs to the N-termini of proteins containing an N-terminal arginine or lysine. The chain is Leucyl/phenylalanyl-tRNA--protein transferase from Gluconobacter oxydans (strain 621H) (Gluconobacter suboxydans).